The primary structure comprises 560 residues: Embryonal Fyn-associated substrate (560 aa).

An SH3 domain is found at Thr5–Ala68. Disordered stretches follow at residues Val176–Ala219 and Ala241–Glu372. The span at Ala198–Arg210 shows a compositional bias: basic and acidic residues. The residue at position 253 (Tyr253) is a Phosphotyrosine; by SRC. The span at Gly259–Pro268 shows a compositional bias: pro residues. 2 consecutive short sequence motifs (SH3-binding) follow at residues Arg304–Pro310 and Arg334–Pro340. A compositionally biased stretch (low complexity) spans Pro305–Pro315. Residues Pro351–Ala361 are compositionally biased toward basic and acidic residues. Positions Phe437–Gly487 are divergent helix-loop-helix motif.

This sequence belongs to the CAS family. Phosphorylated on multiple tyrosine residues. Phosphorylated on tyrosines by FYN and SRC. In terms of tissue distribution, widely expressed. Higher levels found in placenta and embryo. Lower levels found in brain, brainstem, muscle and lung. No expression in liver and intestine.

In terms of biological role, docking protein which plays a central coordinating role for tyrosine-kinase-based signaling related to cell adhesion. May serve as an activator of SRC and a downstream effector. Interacts with the SH3 domain of FYN and with CRK, SRC, and YES. The polypeptide is Embryonal Fyn-associated substrate (Efs) (Mus musculus (Mouse)).